Reading from the N-terminus, the 72-residue chain is Large ribosomal subunit protein uL29 (72 aa).

Belongs to the universal ribosomal protein uL29 family.

In Rhodopirellula baltica (strain DSM 10527 / NCIMB 13988 / SH1), this protein is Large ribosomal subunit protein uL29.